A 625-amino-acid polypeptide reads, in one-letter code: Low affinity potassium transport system protein Kup (625 aa).

12 helical membrane-spanning segments follow: residues 15 to 35 (TIFSTINVLHGLIAISPIYII), 58 to 78 (IIFWTLFFIIFLKYLILIVSI), 103 to 123 (FVIVILGLISMCLFFGDIIII), 140 to 160 (LSFEKFIFIISIAIFTFLFFI), 171 to 191 (IFSFLISIWFILVGLIGLKGI), 218 to 238 (FFVFGTLILLISISEILYINI), 251 to 271 (LFFVFPMIMINCFGQGSIILL), 282 to 302 (FLVPDWARFFTFTFAIIISII), 340 to 360 (IYIPCINWIFYLSAVIQISIF), 366 to 386 (LILIYGIGSIITMSLTTFFSL), 396 to 416 (FKILKITFLLTILILEFFIFI), and 422 to 442 (IICGGWFPIVFGIIFFTIMIT).

It belongs to the HAK/KUP transporter (TC 2.A.72) family.

The protein localises to the cell membrane. The catalysed reaction is K(+)(in) + H(+)(in) = K(+)(out) + H(+)(out). In terms of biological role, responsible for the low-affinity transport of potassium into the cell. Likely operates as a K(+):H(+) symporter. This chain is Low affinity potassium transport system protein Kup, found in Wigglesworthia glossinidia brevipalpis.